The primary structure comprises 429 residues: Adenylosuccinate synthetase (429 aa).

GTP contacts are provided by residues 12-18 (GDEGKGK) and 40-42 (GHT). Catalysis depends on D13, which acts as the Proton acceptor. D13 and G40 together coordinate Mg(2+). Residues 13–16 (DEGK), 38–41 (NAGH), T129, R143, Q223, T238, and R302 contribute to the IMP site. H41 (proton donor) is an active-site residue. 298-304 (VVTGRKR) is a binding site for substrate. GTP is bound by residues R304, 330–332 (KLD), and 412–414 (STS).

The protein belongs to the adenylosuccinate synthetase family. In terms of assembly, homodimer. The cofactor is Mg(2+).

The protein resides in the cytoplasm. It carries out the reaction IMP + L-aspartate + GTP = N(6)-(1,2-dicarboxyethyl)-AMP + GDP + phosphate + 2 H(+). Its pathway is purine metabolism; AMP biosynthesis via de novo pathway; AMP from IMP: step 1/2. Plays an important role in the de novo pathway of purine nucleotide biosynthesis. Catalyzes the first committed step in the biosynthesis of AMP from IMP. The sequence is that of Adenylosuccinate synthetase from Brucella ovis (strain ATCC 25840 / 63/290 / NCTC 10512).